We begin with the raw amino-acid sequence, 432 residues long: NADH-quinone oxidoreductase subunit D (432 aa).

Belongs to the complex I 49 kDa subunit family. NDH-1 is composed of 14 different subunits. Subunits NuoB, C, D, E, F, and G constitute the peripheral sector of the complex.

The protein localises to the cell membrane. The enzyme catalyses a quinone + NADH + 5 H(+)(in) = a quinol + NAD(+) + 4 H(+)(out). Its function is as follows. NDH-1 shuttles electrons from NADH, via FMN and iron-sulfur (Fe-S) centers, to quinones in the respiratory chain. The immediate electron acceptor for the enzyme in this species is believed to be a menaquinone. Couples the redox reaction to proton translocation (for every two electrons transferred, four hydrogen ions are translocated across the cytoplasmic membrane), and thus conserves the redox energy in a proton gradient. This is NADH-quinone oxidoreductase subunit D from Mycobacteroides abscessus (strain ATCC 19977 / DSM 44196 / CCUG 20993 / CIP 104536 / JCM 13569 / NCTC 13031 / TMC 1543 / L948) (Mycobacterium abscessus).